The sequence spans 215 residues: Cytochrome b6 (215 aa).

The chain crosses the membrane as a helical span at residues 32 to 52 (IFYCFGGLVLTCFLIQVATGF). C35 is a heme c binding site. Heme b contacts are provided by H86 and H100. Helical transmembrane passes span 90–110 (ASMMVLMMVLHVFRVYLTGGF), 116–136 (LTWVTGVTLSVVTVSFGVTGY), and 186–206 (AHTFVLPLAAAVLMLTHFLMI). Residues H187 and H202 each coordinate heme b.

This sequence belongs to the cytochrome b family. PetB subfamily. In terms of assembly, the 4 large subunits of the cytochrome b6-f complex are cytochrome b6, subunit IV (17 kDa polypeptide, PetD), cytochrome f and the Rieske protein, while the 4 small subunits are PetG, PetL, PetM and PetN. The complex functions as a dimer. Heme b is required as a cofactor. Heme c serves as cofactor.

The protein localises to the plastid. It localises to the chloroplast thylakoid membrane. In terms of biological role, component of the cytochrome b6-f complex, which mediates electron transfer between photosystem II (PSII) and photosystem I (PSI), cyclic electron flow around PSI, and state transitions. This chain is Cytochrome b6, found in Phaeodactylum tricornutum (strain CCAP 1055/1).